The primary structure comprises 342 residues: Nicotinate-nucleotide--dimethylbenzimidazole phosphoribosyltransferase (342 aa).

Glu-311 acts as the Proton acceptor in catalysis.

Belongs to the CobT family.

It catalyses the reaction 5,6-dimethylbenzimidazole + nicotinate beta-D-ribonucleotide = alpha-ribazole 5'-phosphate + nicotinate + H(+). It participates in nucleoside biosynthesis; alpha-ribazole biosynthesis; alpha-ribazole from 5,6-dimethylbenzimidazole: step 1/2. In terms of biological role, catalyzes the synthesis of alpha-ribazole-5'-phosphate from nicotinate mononucleotide (NAMN) and 5,6-dimethylbenzimidazole (DMB). This is Nicotinate-nucleotide--dimethylbenzimidazole phosphoribosyltransferase from Shewanella piezotolerans (strain WP3 / JCM 13877).